A 69-amino-acid polypeptide reads, in one-letter code: MTETDKKQEQENHAECEDKPKPCCVCKPEKEERDTCILFNGQDSEKCKEFIEKYKECMKGYGFEVPSAN.

Residues C23 and C24 each coordinate Cu cation. The 43-residue stretch at 23-65 (CCVCKPEKEERDTCILFNGQDSEKCKEFIEKYKECMKGYGFEV) folds into the CHCH domain. 2 short sequence motifs (cx9C motif) span residues 26–36 (CKPEKEERDTC) and 47–57 (CKEFIEKYKEC). 2 cysteine pairs are disulfide-bonded: C26-C57 and C36-C47.

It belongs to the COX17 family.

The protein localises to the mitochondrion intermembrane space. In terms of biological role, copper chaperone for cytochrome c oxidase (COX). Binds two copper ions and deliver them to the Cu(A) site of COX. The polypeptide is Cytochrome c oxidase copper chaperone (COX17) (Saccharomyces cerevisiae (strain ATCC 204508 / S288c) (Baker's yeast)).